The primary structure comprises 1297 residues: Probable bifunctional E2/E3 enzyme R795 (1297 aa).

The RING-type; atypical zinc finger occupies 74-128; the sequence is CAICRYQENEPCIEHKSSESNTKCPIAQSVSCSHSFHACCISRWLHTKKTCPLCN. The region spanning 678 to 750 is the U-box domain; that stretch reads EPLQEFLCPI…RDWKENNTVI (73 aa). The VWFA domain maps to 899-1082; sequence EMTLEIHSSN…LDIMELETMI (184 aa). The UBC core domain maps to 1133–1279; sequence QKLIRVQREI…IIDYVNKFAL (147 aa). The Glycyl thioester intermediate role is filled by cysteine 1217.

This sequence in the C-terminal section; belongs to the ubiquitin-conjugating enzyme family.

It carries out the reaction S-ubiquitinyl-[E2 ubiquitin-conjugating enzyme]-L-cysteine + [acceptor protein]-L-lysine = [E2 ubiquitin-conjugating enzyme]-L-cysteine + N(6)-ubiquitinyl-[acceptor protein]-L-lysine.. It catalyses the reaction S-ubiquitinyl-[E1 ubiquitin-activating enzyme]-L-cysteine + [E2 ubiquitin-conjugating enzyme]-L-cysteine = [E1 ubiquitin-activating enzyme]-L-cysteine + S-ubiquitinyl-[E2 ubiquitin-conjugating enzyme]-L-cysteine.. The protein operates within protein modification; protein ubiquitination. Catalyzes the covalent attachment of ubiquitin to other proteins. Also acts as an E3 ubiquitin-protein ligase. This chain is Probable bifunctional E2/E3 enzyme R795, found in Acanthamoeba polyphaga (Amoeba).